We begin with the raw amino-acid sequence, 257 residues long: Acetylglutamate kinase (257 aa).

Residues 43-44 (GG), R65, and N157 contribute to the substrate site. ATP-binding positions include 180-185 (DVSGIL) and 208-210 (IIT).

It belongs to the acetylglutamate kinase family. ArgB subfamily. As to quaternary structure, homodimer.

The protein localises to the cytoplasm. It catalyses the reaction N-acetyl-L-glutamate + ATP = N-acetyl-L-glutamyl 5-phosphate + ADP. It functions in the pathway amino-acid biosynthesis; L-arginine biosynthesis; N(2)-acetyl-L-ornithine from L-glutamate: step 2/4. In terms of biological role, catalyzes the ATP-dependent phosphorylation of N-acetyl-L-glutamate. This Salmonella agona (strain SL483) protein is Acetylglutamate kinase.